Here is a 333-residue protein sequence, read N- to C-terminus: Cytochrome f (333 aa).

The first 44 residues, 1–44, serve as a signal peptide directing secretion; it reads MRNACTRARLTRTARAMVKTLFIAIASVTFFFTSDLALPQSAAA. Heme contacts are provided by tyrosine 45, cysteine 66, cysteine 69, and histidine 70. The chain crosses the membrane as a helical span at residues 299 to 318; the sequence is VGWLIAFVALVMLAQVMLVL.

Belongs to the cytochrome f family. In terms of assembly, the 4 large subunits of the cytochrome b6-f complex are cytochrome b6, subunit IV (17 kDa polypeptide, PetD), cytochrome f and the Rieske protein, while the 4 small subunits are PetG, PetL, PetM and PetN. The complex functions as a dimer. Heme serves as cofactor.

The protein resides in the cellular thylakoid membrane. Its function is as follows. Component of the cytochrome b6-f complex, which mediates electron transfer between photosystem II (PSII) and photosystem I (PSI), cyclic electron flow around PSI, and state transitions. This Trichormus variabilis (strain ATCC 29413 / PCC 7937) (Anabaena variabilis) protein is Cytochrome f.